Consider the following 367-residue polypeptide: MLQKLVLDKLEEIEKRFKEIENLLTKEEIISDLSRYQSLLKERAKIEEIVEKFSEYKKLLKEREDLEVMTKEEQDEDLRSLAEAELEEIEKKLEKIEFDLKALLLPKDPNDEKNIIMEIRAGTGGEEAALFAADLFRMYVGYAQKKGWKVEIVSSNPTGLGGYKEIIFIVEGKGAYSRLKFESGVHRVQRVPITESSGRIHTSTATVAVLPEMEEVDVEIDPKDLRIETFRSGGAGGQHVNKTESGVRITHIPSGIVVQCQDERSQHQNREKAMKVLRARLYEYYQREKENEIASQRRQQVGTGERSEKIRTYNFPQRRVTDHRINYSSFQLEEVLSGELDEFIDRLILAEKEEQIKKLFEEVGATS.

Residue glutamine 238 is modified to N5-methylglutamine.

It belongs to the prokaryotic/mitochondrial release factor family. In terms of processing, methylated by PrmC. Methylation increases the termination efficiency of RF1.

It is found in the cytoplasm. In terms of biological role, peptide chain release factor 1 directs the termination of translation in response to the peptide chain termination codons UAG and UAA. The polypeptide is Peptide chain release factor 1 (Dictyoglomus thermophilum (strain ATCC 35947 / DSM 3960 / H-6-12)).